A 290-amino-acid polypeptide reads, in one-letter code: 4-diphosphocytidyl-2-C-methyl-D-erythritol kinase (290 aa).

Lys-8 is an active-site residue. 89 to 99 is an ATP binding site; the sequence is PIGAGVGGGSS. The active site involves Asp-131.

Belongs to the GHMP kinase family. IspE subfamily.

It carries out the reaction 4-CDP-2-C-methyl-D-erythritol + ATP = 4-CDP-2-C-methyl-D-erythritol 2-phosphate + ADP + H(+). Its pathway is isoprenoid biosynthesis; isopentenyl diphosphate biosynthesis via DXP pathway; isopentenyl diphosphate from 1-deoxy-D-xylulose 5-phosphate: step 3/6. Functionally, catalyzes the phosphorylation of the position 2 hydroxy group of 4-diphosphocytidyl-2C-methyl-D-erythritol. This is 4-diphosphocytidyl-2-C-methyl-D-erythritol kinase from Chlamydia felis (strain Fe/C-56) (Chlamydophila felis).